Reading from the N-terminus, the 186-residue chain is Translation initiation factor IF-3 (186 aa).

Belongs to the IF-3 family. As to quaternary structure, monomer.

The protein localises to the cytoplasm. IF-3 binds to the 30S ribosomal subunit and shifts the equilibrium between 70S ribosomes and their 50S and 30S subunits in favor of the free subunits, thus enhancing the availability of 30S subunits on which protein synthesis initiation begins. The sequence is that of Translation initiation factor IF-3 from Chlamydia muridarum (strain MoPn / Nigg).